The following is a 556-amino-acid chain: MSVPVSQIPSLKAKGVIMRRNANYHPNIWGDRFINYVPVDKMNHTCHLQAIEELKDAVRRELLTATGLSQLNLIDAIQRLGVGYHFERELEEALQHVYHKNHYHDDTEDNLYSISLRFRLLRQHGYYVSCDILNKFKDEKDNFKESLTTDVPGMLSLYEAAHPGVHGEDILDEAIAFTTTHLKSLAIDHLRNPSLASQVIHALRQPLHRGVPRLENRRYISIYQDEVSHNKALVKLFKLDFNLVQSLHKKELSEISRWWKELDLANKLPFARDRLVECYFWIIGVYYEPQYSLARKILTKTIAMGSIIDDIYDVYGTPEELNLFTDAIERWDASCMDQLPEYMQIFYEALLDLYNEIEKEIAKEGWSYRVHYAKEAMKILARGYHDESKWFHNNYIPTMEEYMHVALVTSGYTMLTTSSFLGMDNIVTKETFDWVFSGPKIIRASGTIARLMDDVKSHKFEQERGHAASAVECYMEQHGVSEQEVCKEFYQQVGNAWKDINQDFLKPTDVPMTILMRVLNLARVIDVVYKEGDGYTHVGKVMKENVASLLIDPIPV.

Residues aspartate 309, aspartate 313, aspartate 453, and glutamate 461 each coordinate Mg(2+). The DDXXD motif signature appears at 309–313 (DDIYD).

The protein belongs to the terpene synthase family. Tpsa subfamily. Requires Mg(2+) as cofactor. It depends on Mn(2+) as a cofactor. As to expression, mostly expressed in roots and mature leaflets and, to a lower extent, in rachis and developing leaflets.

The enzyme catalyses (2E,6E)-farnesyl diphosphate = alpha-humulene + diphosphate. The catalysed reaction is (2E,6E)-farnesyl diphosphate = alpha-selinene + diphosphate. It catalyses the reaction (2E,6E)-farnesyl diphosphate = delta-cadinene + diphosphate. It carries out the reaction (2E,6E)-farnesyl diphosphate = (1S,2S,4R)-beta-elemene + diphosphate. Its pathway is secondary metabolite biosynthesis; terpenoid biosynthesis. Sesquiterpene synthase involved in the biosynthesis of volatile compounds known for their medicinal efficacy for treating enteritis, dysentery, itch and some cancers. Mediates the conversion of (2E,6E)-farnesyl diphosphate (FPP) into beta-elemene, alpha-humulene, delta-cadinene and alpha-selinene. This Toona sinensis (Chinese mahogany) protein is Sesquiterpene synthase 2.